The chain runs to 365 residues: Patr class I histocompatibility antigen, A-108 alpha chain (365 aa).

The signal sequence occupies residues 1 to 24 (MAVMPPRTLLLLLSGALALTQTWA). An alpha-1 region spans residues 25-114 (GSHSMRYFYT…LRGYYNQSED (90 aa)). Over 25 to 308 (GSHSMRYFYT…EPSSQPTIPI (284 aa)) the chain is Extracellular. Asparagine 110 carries an N-linked (GlcNAc...) asparagine glycan. Residues 115 to 206 (GSHTIQIMYG…ENGKETLQRT (92 aa)) are alpha-2. Cystine bridges form between cysteine 125–cysteine 188 and cysteine 227–cysteine 283. The tract at residues 207–298 (DPPKTHMTHH…GLPKPLTLRW (92 aa)) is alpha-3. The Ig-like C1-type domain maps to 209–295 (PKTHMTHHPI…QHEGLPKPLT (87 aa)). Residues 299-308 (EPSSQPTIPI) form a connecting peptide region. A helical transmembrane segment spans residues 309–332 (VGIIAGLVLLGAVITGAVVAAVMW). Topologically, residues 333–365 (RRKSSDRKGGSYTQAASSDSAQGSDVSLTACKV) are cytoplasmic. The segment at 339–360 (RKGGSYTQAASSDSAQGSDVSL) is disordered. Phosphoserine is present on serine 343. Tyrosine 344 is subject to Phosphotyrosine. The span at 346–359 (QAASSDSAQGSDVS) shows a compositional bias: low complexity. Phosphoserine occurs at positions 349, 350, 352, 356, and 359.

This sequence belongs to the MHC class I family. In terms of assembly, heterodimer of an alpha chain and a beta chain (beta-2-microglobulin).

The protein localises to the membrane. In terms of biological role, involved in the presentation of foreign antigens to the immune system. This Pan troglodytes (Chimpanzee) protein is Patr class I histocompatibility antigen, A-108 alpha chain (Patr-A).